Here is a 126-residue protein sequence, read N- to C-terminus: Histone H2B 1.2 (126 aa).

The segment covering 1 to 12 (MPEPAKSAPAPK) has biased composition (low complexity). Residues 1–35 (MPEPAKSAPAPKKGSKKAVTKTPKKDGKKRRKSRK) are disordered. An N6-acetyllysine mark is found at Lys-6 and Lys-13. A Phosphoserine modification is found at Ser-15. Lys-16 and Lys-21 each carry N6-acetyllysine. O-linked (GlcNAc) serine glycosylation is present at Ser-113. Residue Lys-121 forms a Glycyl lysine isopeptide (Lys-Gly) (interchain with G-Cter in ubiquitin) linkage.

It belongs to the histone H2B family. As to quaternary structure, the nucleosome is a histone octamer containing two molecules each of H2A, H2B, H3 and H4 assembled in one H3-H4 heterotetramer and two H2A-H2B heterodimers. The octamer wraps approximately 147 bp of DNA. In terms of processing, monoubiquitination of Lys-121 by BRE1 gives a specific tag for epigenetic transcriptional activation and is also prerequisite for histone H3 'Lys-4' and 'Lys-79' methylation. Phosphorylated on Ser-15 during developmentally programmed apoptosis; which may facilitate apoptotic chromatin condensation. Post-translationally, glcNAcylation at Ser-113 promotes monoubiquitination of Lys-121. It fluctuates in response to extracellular glucose, and associates with transcribed genes.

The protein localises to the nucleus. Its subcellular location is the chromosome. In terms of biological role, core component of nucleosome. Nucleosomes wrap and compact DNA into chromatin, limiting DNA accessibility to the cellular machineries which require DNA as a template. Histones thereby play a central role in transcription regulation, DNA repair, DNA replication and chromosomal stability. DNA accessibility is regulated via a complex set of post-translational modifications of histones, also called histone code, and nucleosome remodeling. This chain is Histone H2B 1.2, found in Xenopus laevis (African clawed frog).